A 428-amino-acid polypeptide reads, in one-letter code: Aerobic C4-dicarboxylate transport protein (428 aa).

8 helical membrane passes run 5–27 (LFKSLYFQVLTAIAIGILLGHFY), 47–64 (MIIAPVIFCTVVTGIAGM), 77–99 (ALLYFEIVSTIALIIGLIIVNVV), 141–163 (VIGAFASGNILQVLLFAVLFGFA), 184–206 (VIFGIINMIMRLAPIGAFGAMAF), 219–241 (LGQLIICFYITCILFVVLVLGSI), 326–348 (IVHQITLLIVLLLSSKGAAGVTG), and 352–374 (IVLAATLSAVGHLPVAGLALILG).

The protein belongs to the dicarboxylate/amino acid:cation symporter (DAACS) (TC 2.A.23) family.

The protein resides in the cell inner membrane. Functionally, responsible for the aerobic transport of the dicarboxylates fumarate and malate and to a lesser extent succinate, from the periplasm across the inner membrane. This Escherichia coli O157:H7 protein is Aerobic C4-dicarboxylate transport protein.